The following is a 337-amino-acid chain: Ycf66-like protein (337 aa).

The tract at residues 111–337 is disordered; that stretch reads TEAELDQLEP…GADDQERFDY (227 aa). Residues 113–123 show a composition bias toward acidic residues; that stretch reads AELDQLEPEDE. Composition is skewed to basic and acidic residues over residues 133–143 and 253–269; these read RGYDDDARSGR and FGDR…RPYE. Residues 304–316 are compositionally biased toward polar residues; sequence QSRSGNPRSQRPS.

This sequence belongs to the ycf66 family.

The chain is Ycf66-like protein from Synechocystis sp. (strain ATCC 27184 / PCC 6803 / Kazusa).